The following is a 171-amino-acid chain: Small ribosomal subunit protein uS5 (171 aa).

The 64-residue stretch at 16–79 (LVERLVTVDR…EAAKRNMITV (64 aa)) folds into the S5 DRBM domain.

This sequence belongs to the universal ribosomal protein uS5 family. As to quaternary structure, part of the 30S ribosomal subunit. Contacts proteins S4 and S8.

With S4 and S12 plays an important role in translational accuracy. In terms of biological role, located at the back of the 30S subunit body where it stabilizes the conformation of the head with respect to the body. The sequence is that of Small ribosomal subunit protein uS5 from Psychrobacter arcticus (strain DSM 17307 / VKM B-2377 / 273-4).